A 456-amino-acid chain; its full sequence is Coenzyme F420 hydrogenase subunit alpha (456 aa).

Ni(2+) is bound by residues Cys-63, Cys-66, Cys-432, and Cys-435.

The protein belongs to the [NiFe]/[NiFeSe] hydrogenase large subunit family. Pentamer of two alpha chains, two beta chains and a gamma chain. Ni(2+) is required as a cofactor. Iron-sulfur cluster serves as cofactor. It depends on FAD as a cofactor.

The protein localises to the cell membrane. It carries out the reaction oxidized coenzyme F420-(gamma-L-Glu)(n) + H2 + H(+) = reduced coenzyme F420-(gamma-L-Glu)(n). Its function is as follows. Reduces the physiological low-potential two-electron acceptor coenzyme F420, and the artificial one-electron acceptor methylviologen. The chain is Coenzyme F420 hydrogenase subunit alpha (frhA) from Methanosarcina barkeri (strain Fusaro / DSM 804).